Reading from the N-terminus, the 321-residue chain is tRNA uridine(34) hydroxylase (321 aa).

In terms of domain architecture, Rhodanese spans 135–233 (DDPDTLVIDT…YLEQVPEEES (99 aa)). The active-site Cysteine persulfide intermediate is the C193. The tract at residues 301–321 (RQRQMDQLSSASSKKSDDFSL) is disordered.

Belongs to the TrhO family.

The catalysed reaction is uridine(34) in tRNA + AH2 + O2 = 5-hydroxyuridine(34) in tRNA + A + H2O. In terms of biological role, catalyzes oxygen-dependent 5-hydroxyuridine (ho5U) modification at position 34 in tRNAs. This chain is tRNA uridine(34) hydroxylase, found in Parasynechococcus marenigrum (strain WH8102).